Consider the following 411-residue polypeptide: Multidrug resistance protein MdtH (411 aa).

A run of 11 helical transmembrane segments spans residues 13 to 33 (YFLL…FPLI), 45 to 65 (ALLV…LGIF), 73 to 95 (LGAK…FMGI), 99 to 116 (PWLL…GTLF), 139 to 159 (LLMI…SWLL), 165 to 185 (LVCL…AWLL), 213 to 233 (YVFT…ILPI), 243 to 263 (AAVR…LYPI), 288 to 308 (IIPI…GIFY), 340 to 360 (LGLA…YDMG), and 365 to 385 (IPQL…LGFY).

This sequence belongs to the major facilitator superfamily. DHA1 family. MdtH (TC 2.A.1.2.21) subfamily.

The protein resides in the cell membrane. The polypeptide is Multidrug resistance protein MdtH (Baumannia cicadellinicola subsp. Homalodisca coagulata).